The following is a 250-amino-acid chain: Probable transcriptional regulatory protein SACE_2018 (250 aa).

This sequence belongs to the TACO1 family.

It is found in the cytoplasm. The chain is Probable transcriptional regulatory protein SACE_2018 from Saccharopolyspora erythraea (strain ATCC 11635 / DSM 40517 / JCM 4748 / NBRC 13426 / NCIMB 8594 / NRRL 2338).